Here is a 300-residue protein sequence, read N- to C-terminus: Probable endonuclease 4 (300 aa).

H68, H109, E144, D178, H181, H213, D226, H228, and E258 together coordinate Zn(2+).

Belongs to the AP endonuclease 2 family. Zn(2+) is required as a cofactor.

The enzyme catalyses Endonucleolytic cleavage to 5'-phosphooligonucleotide end-products.. Functionally, endonuclease IV plays a role in DNA repair. It cleaves phosphodiester bonds at apurinic or apyrimidinic (AP) sites, generating a 3'-hydroxyl group and a 5'-terminal sugar phosphate. The sequence is that of Probable endonuclease 4 from Latilactobacillus sakei subsp. sakei (strain 23K) (Lactobacillus sakei subsp. sakei).